A 374-amino-acid polypeptide reads, in one-letter code: Golgi-associated kinase 1B (374 aa).

Topologically, residues 1–38 (MSPDRTGRGSSSSSSSLKRLVCKSFVRAWGRRRPNLRR) are cytoplasmic. A helical; Signal-anchor for type II membrane protein transmembrane segment spans residues 39 to 61 (AVLLICTASAIYGIVIASQVLRG). Over 62–374 (STHPGKALRK…LLQVYTRLDR (313 aa)) the chain is Extracellular. Residues 136-146 (VRPKKRRKYGA) are compositionally biased toward basic residues. Positions 136–177 (VRPKKRRKYGARRPGVVQDTESKKDTLWSKVPNSQHKSQAQS) are disordered. Over residues 166-177 (VPNSQHKSQAQS) the composition is skewed to polar residues. N-linked (GlcNAc...) asparagine glycans are attached at residues Asn-281 and Asn-314.

The protein belongs to the GASK family.

It is found in the golgi apparatus membrane. The protein is Golgi-associated kinase 1B of Xenopus laevis (African clawed frog).